Consider the following 305-residue polypeptide: MGHALCVCSRGTVIIDNKRYLFVQKLGEGGFSYVDLVEGLHDGHFYALKRILCHEQQDQEEAQREADMHRLFQHPNILRLMAYSLKERGAKHEAWLLLPFFKRGTLWNEIERLKDQGNFLTEDQILPLLLGICRGLEAIHAKGYAHRDLKPTNILLGDEGQPVLMDLGSMNQACIQVEGSRQALALQDWAAQRCTISYRAPELFSVQSHCVIDERTDVWSLGCVLYAMMFGEGPYDMVFQKGDSVALAVQNDLSIPQSPRHSSALRQLLASMMTVDPQQRPHIPVLLSQLEALQPPAPGQHTTQI.

G2 carries the N-myristoyl glycine lipid modification. S-palmitoyl cysteine attachment occurs at residues C6 and C8. The Protein kinase domain maps to 20–293; sequence YLFVQKLGEG…PVLLSQLEAL (274 aa). ATP-binding positions include 26–34 and K49; that span reads LGEGGFSYV. D148 serves as the catalytic Proton acceptor. Residues 166–202 are activation loop; that stretch reads DLGSMNQACIQVEGSRQALALQDWAAQRCTISYRAPE. The residue at position 197 (S197) is a Phosphoserine; by autocatalysis. Y198 carries the phosphotyrosine; by autocatalysis modification.

The protein belongs to the protein kinase superfamily. Ser/Thr protein kinase family. As to quaternary structure, monomer. Interacts with DRG1 (via its N-terminal); the interaction phosphorylates DRG1. Post-translationally, mainly autophosphorylated on serine/threonine residues. Also autophosphorylated on Tyr-198. In terms of tissue distribution, expressed in heart, liver, brain, spleen, lung, skeletal muscle, kidney and testis.

It localises to the cytoplasm. It is found in the perinuclear region. Its subcellular location is the membrane. It catalyses the reaction L-seryl-[protein] + ATP = O-phospho-L-seryl-[protein] + ADP + H(+). It carries out the reaction L-threonyl-[protein] + ATP = O-phospho-L-threonyl-[protein] + ADP + H(+). The catalysed reaction is L-tyrosyl-[protein] + ATP = O-phospho-L-tyrosyl-[protein] + ADP + H(+). Functionally, membrane-associated protein kinase that phosphorylates on serine and threonine residues. In vitro substrates include DRG1, ENO1 and EIF4EBP1. Also autophosphorylates. May be involved in secretory vesicle trafficking or intracellular signaling. May have a role in regulating stromal-epithelial interactions that occur during ductal morphogenesis in the mammary gland. May be involved in TGF-beta signaling. Able to autophosphorylate on Tyr residue; it is however unclear whether it has tyrosine-protein kinase toward other proteins. This chain is Serine/threonine-protein kinase 16 (Stk16), found in Rattus norvegicus (Rat).